Consider the following 262-residue polypeptide: Plant intracellular Ras-group-related LRR protein 7 (262 aa).

LRR repeat units lie at residues 19 to 42 (WRST…VLQV), 43 to 66 (GNSL…VGTL), 68 to 89 (NMQR…IGYL), 90 to 112 (RNLK…LGSL), 113 to 135 (SNLQ…VGDL), 137 to 158 (NMLL…IGGC), 159 to 181 (SSLE…ICNL), 182 to 204 (VCLK…LLKD), and 206 to 231 (KALQ…GFTE).

Belongs to the SHOC2 family. In terms of tissue distribution, widely expressed and preferentially in leaf sheathes.

Leucine-rich repeat protein that likely mediates protein interactions, possibly in the context of signal transduction. This Oryza sativa subsp. japonica (Rice) protein is Plant intracellular Ras-group-related LRR protein 7 (IRL7).